The chain runs to 58 residues: Small ribosomal subunit protein bS21 (58 aa).

A disordered region spans residues lysine 34–lysine 58. The span at valine 43–lysine 58 shows a compositional bias: basic residues.

The protein belongs to the bacterial ribosomal protein bS21 family.

This chain is Small ribosomal subunit protein bS21, found in Clostridium acetobutylicum (strain ATCC 824 / DSM 792 / JCM 1419 / IAM 19013 / LMG 5710 / NBRC 13948 / NRRL B-527 / VKM B-1787 / 2291 / W).